We begin with the raw amino-acid sequence, 567 residues long: Alpha-glucosidase (567 aa).

The signal sequence occupies residues 1–17; that stretch reads MKAVIVFCLMALSIVDA. 2 N-linked (GlcNAc...) asparagine glycosylation sites follow: Asn88 and Asn123. Residue Asp223 is the Nucleophile of the active site. N-linked (GlcNAc...) asparagine glycosylation is present at Asn247. Residue Glu286 is the Proton donor of the active site. N-linked (GlcNAc...) asparagine glycosylation is found at Asn290, Asn313, Asn319, Asn499, and Asn507.

In terms of assembly, monomer. Expressed specifically in the hypopharyngeal glands of worker bees. Also found in the brain of worker bees (at protein level).

It catalyses the reaction Hydrolysis of terminal, non-reducing (1-&gt;4)-linked alpha-D-glucose residues with release of alpha-D-glucose.. In terms of biological role, converts sucrose in nectar to glucose and fructose. The protein is Alpha-glucosidase of Apis mellifera (Honeybee).